We begin with the raw amino-acid sequence, 499 residues long: Nuclear receptor-binding protein 2 (499 aa).

The tract at residues 1–31 (MAAPEPAPRRGREREREDESEDESDILEESP) is disordered. Residues 7–17 (APRRGRERERE) show a composition bias toward basic and acidic residues. Residues 18–28 (DESEDESDILE) show a composition bias toward acidic residues. The Protein kinase domain occupies 36-304 (QKRREQVNQG…AHNLLFHRVL (269 aa)). The disordered stretch occupies residues 396 to 416 (APPPEEAQKAKTPTPEPFDSE). A phosphothreonine mark is found at threonine 407 and threonine 409.

The protein belongs to the protein kinase superfamily. Ser/Thr protein kinase family. In terms of tissue distribution, expressed in Purkinje cells of the cerebellum and neurons in the CA3 region of the hippocampus. Also detected in non-neural tissues including mesenchymal layer adjacent to epithelium in developing bronchi of the lung, the epithelium of the stomach as well as cells in the liver.

The protein resides in the cytoplasm. Functionally, may regulate apoptosis of neural progenitor cells during their differentiation. In Mus musculus (Mouse), this protein is Nuclear receptor-binding protein 2.